We begin with the raw amino-acid sequence, 615 residues long: 1-deoxy-D-xylulose-5-phosphate synthase (615 aa).

Thiamine diphosphate-binding positions include H72 and G111–S113. Residue D142 coordinates Mg(2+). Residues G143–A144, N171, Y278, and E360 contribute to the thiamine diphosphate site. N171 serves as a coordination point for Mg(2+).

The protein belongs to the transketolase family. DXPS subfamily. In terms of assembly, homodimer. The cofactor is Mg(2+). Thiamine diphosphate serves as cofactor.

The enzyme catalyses D-glyceraldehyde 3-phosphate + pyruvate + H(+) = 1-deoxy-D-xylulose 5-phosphate + CO2. Its pathway is metabolic intermediate biosynthesis; 1-deoxy-D-xylulose 5-phosphate biosynthesis; 1-deoxy-D-xylulose 5-phosphate from D-glyceraldehyde 3-phosphate and pyruvate: step 1/1. Catalyzes the acyloin condensation reaction between C atoms 2 and 3 of pyruvate and glyceraldehyde 3-phosphate to yield 1-deoxy-D-xylulose-5-phosphate (DXP). In Campylobacter jejuni subsp. doylei (strain ATCC BAA-1458 / RM4099 / 269.97), this protein is 1-deoxy-D-xylulose-5-phosphate synthase.